We begin with the raw amino-acid sequence, 103 residues long: Large ribosomal subunit protein bL21 (103 aa).

This sequence belongs to the bacterial ribosomal protein bL21 family. As to quaternary structure, part of the 50S ribosomal subunit. Contacts protein L20.

Its function is as follows. This protein binds to 23S rRNA in the presence of protein L20. In Cupriavidus necator (strain ATCC 17699 / DSM 428 / KCTC 22496 / NCIMB 10442 / H16 / Stanier 337) (Ralstonia eutropha), this protein is Large ribosomal subunit protein bL21.